The following is a 140-amino-acid chain: Cystatin-like 1 (140 aa).

An N-terminal signal peptide occupies residues 1–23; sequence MEMKARGLRIPLLLLLVTVVVMA. One can recognise a Cystatin domain in the interval 32–126; it reads GGFKEKAMSK…CKSLIYSVPW (95 aa). A glycan (N-linked (GlcNAc...) asparagine) is linked at N45. 2 disulfide bridges follow: C94-C104 and C117-C137.

It belongs to the cystatin family. As to expression, highly expressed in testis where it localizes to spermatogonium, spermatocyes and round spermatids. Not detected in spermatozoa. Also detected in epididymis, cerebrum and pituitary.

It is found in the secreted. The polypeptide is Cystatin-like 1 (Mus musculus (Mouse)).